We begin with the raw amino-acid sequence, 1508 residues long: ABC-type transporter oblD (1508 aa).

2 disordered regions span residues 1–35 and 54–82; these read MSLGPGGFEATPNSVMPSDASLHNQSHHTDSLTNN and KYTQNSVYSTTSQNPFAAEPGSKLDPNGG. A compositionally biased stretch (polar residues) spans 11–24; sequence TPNSVMPSDASLHN. N-linked (GlcNAc...) asparagine glycosylation is found at asparagine 24 and asparagine 35. Residues 55-68 show a composition bias toward polar residues; it reads YTQNSVYSTTSQNP. Residues asparagine 83, asparagine 231, and asparagine 314 are each glycosylated (N-linked (GlcNAc...) asparagine). One can recognise an ABC transporter 1 domain in the interval 136-390; that stretch reads LEAVGLVRKL…FLNMGFVCPD (255 aa). 5 helical membrane passes run 501–521, 536–556, 610–630, 643–663, and 752–772; these read ITISSAMGNAIIALIISSMFF, LLFFAIVINAFSSGLEMLTLY, GNFFFFVFTSFVLTLTMSMFF, ALPFAAILITGLTMYTGFTIP, and GIIFAFMVILCAIYLVASDFI. Residues 828-1070 form the ABC transporter 2 domain; the sequence is FQWKDICYDI…ILIDYFTRNG (243 aa). 864–871 lines the ATP pocket; sequence GVSGAGKT. The next 4 membrane-spanning stretches (helical) occupy residues 1172 to 1192, 1206 to 1226, 1296 to 1316, and 1322 to 1342; these read YIYSKAFLCVSTSLYVGFSLY, FAIFTLFFLFGQFIQQIMPHF, LFVWVFLMFASTFAHFMIAAL, and AGNMGNLLFTLCVIFCGILTT. Asparagine 1390 carries N-linked (GlcNAc...) asparagine glycosylation. Residues 1443–1463 traverse the membrane as a helical segment; that stretch reads FGLMWVFVVFNAFAACGLYYW.

It belongs to the ABC transporter superfamily. ABCG family. PDR (TC 3.A.1.205) subfamily.

It localises to the cell membrane. ABC-type transporter; part of the gene cluster that mediates the biosynthesis of the sesterterpenes ophiobolins, fungal phytotoxins with potential anti-cancer activities. Acts as a specific transporter involved in ophiobolins secretion. The polypeptide is ABC-type transporter oblD (Cochliobolus heterostrophus (strain C5 / ATCC 48332 / race O) (Southern corn leaf blight fungus)).